Reading from the N-terminus, the 258-residue chain is MGALGDSAYGARGRLIKFSYIVTALISILFSISCICYGIWLLARRSQYAELVSPSLYVDVGRILVIISILSILNYLICFYAIFKEMRCFVTSCAVASIVIAVMLIIGGCIGLNFRDQLTHYTPLNLKMLTSLRELYGTHDMKGITESWDALQSNFKCCGVNGTDNAQIWKTSKWYMHQRAPKLLIPESCCIPSEIERCRSNPFDQDAPPPYYTSTCYEPLQNDLLHVMNVASWLCITNAIVQIIPSVAGCWYSKLIRK.

Over 1-20 (MGALGDSAYGARGRLIKFSY) the chain is Cytoplasmic. A helical membrane pass occupies residues 21–41 (IVTALISILFSISCICYGIWL). Residues 42–62 (LARRSQYAELVSPSLYVDVGR) are Extracellular-facing. Residues 63–83 (ILVIISILSILNYLICFYAIF) traverse the membrane as a helical segment. At 84–93 (KEMRCFVTSC) the chain is on the cytoplasmic side. A helical transmembrane segment spans residues 94–114 (AVASIVIAVMLIIGGCIGLNF). Residues 115–223 (RDQLTHYTPL…STCYEPLQND (109 aa)) lie on the Extracellular side of the membrane. A helical membrane pass occupies residues 224 to 244 (LLHVMNVASWLCITNAIVQII). At 245–258 (PSVAGCWYSKLIRK) the chain is on the cytoplasmic side.

It belongs to the tetraspanin (TM4SF) family. As to quaternary structure, interacts with doxa-1 and bli-3. As to expression, expressed in the body wall (hyp7 hypodermal syncitium), pharynx and vulva. Expressed in a punctate pattern along the thick region of the hypodermis.

The protein resides in the membrane. Plays a role in cuticle biogenesis. In complex with doxa-1 and the dual oxidase bli-3, promotes the generation of reactive oxygen species (ROS) and tyrosine cross-linking of collagen, thus stabilizing cuticular extracellular matrix. The sequence is that of Tetraspanin-15 from Caenorhabditis elegans.